Consider the following 706-residue polypeptide: Polyribonucleotide nucleotidyltransferase (706 aa).

Asp486 and Asp492 together coordinate Mg(2+). The KH domain maps to 553–612 (PRIYTMKINPEKIKDVIGKGGSVIRALTDETGTTIEIEDDGTIKIAATDGDKAKHAIRRI). Positions 622 to 690 (NRIYAGKVTR…RQGRIRLSMK (69 aa)) constitute an S1 motif domain.

This sequence belongs to the polyribonucleotide nucleotidyltransferase family. Component of the RNA degradosome, which is a multiprotein complex involved in RNA processing and mRNA degradation. Mg(2+) is required as a cofactor.

The protein localises to the cytoplasm. The enzyme catalyses RNA(n+1) + phosphate = RNA(n) + a ribonucleoside 5'-diphosphate. Functionally, involved in mRNA degradation. Catalyzes the phosphorolysis of single-stranded polyribonucleotides processively in the 3'- to 5'-direction. In Yersinia enterocolitica serotype O:8 / biotype 1B (strain NCTC 13174 / 8081), this protein is Polyribonucleotide nucleotidyltransferase.